The following is a 113-amino-acid chain: U11-theraphotoxin-Hhn1a (113 aa).

The N-terminal stretch at 1 to 21 (MNTVRVTFLLVFVLAVSLGQT) is a signal peptide. A propeptide spanning residues 22-74 (DKDENRMEMQEKTEQGKSYLDFAENLLLQKLEELEAKLLEEDSEESRNSRQKR) is cleaved from the precursor. 3 disulfides stabilise this stretch: cysteine 75/cysteine 90, cysteine 82/cysteine 95, and cysteine 89/cysteine 110.

The protein belongs to the neurotoxin 14 (magi-1) family. 01 (HNTX-16) subfamily. Expressed by the venom gland.

The protein resides in the secreted. Functionally, probable ion channel inhibitor. The protein is U11-theraphotoxin-Hhn1a of Cyriopagopus hainanus (Chinese bird spider).